We begin with the raw amino-acid sequence, 206 residues long: 2,3-bisphosphoglycerate-dependent phosphoglycerate mutase (206 aa).

Substrate is bound by residues 9-16 (RHGQSEWN), 22-23 (TG), arginine 61, 88-91 (ERDY), lysine 99, 115-116 (RR), and 159-160 (GN). Catalysis depends on histidine 10, which acts as the Tele-phosphohistidine intermediate. The Proton donor/acceptor role is filled by glutamate 88.

Belongs to the phosphoglycerate mutase family. BPG-dependent PGAM subfamily. As to quaternary structure, homodimer.

It catalyses the reaction (2R)-2-phosphoglycerate = (2R)-3-phosphoglycerate. The protein operates within carbohydrate degradation; glycolysis; pyruvate from D-glyceraldehyde 3-phosphate: step 3/5. Its function is as follows. Catalyzes the interconversion of 2-phosphoglycerate and 3-phosphoglycerate. This is 2,3-bisphosphoglycerate-dependent phosphoglycerate mutase from Brucella abortus (strain S19).